Consider the following 80-residue polypeptide: Conotoxin Cl10.1 (80 aa).

A signal peptide spans 1–20 (MTTLGMTMLVLLLLLPLATC). A propeptide spanning residues 21–36 (LGDGERSPWDSLLRAL) is cleaved from the precursor.

In terms of processing, contains 4 disulfide bonds. Expressed by the venom duct.

The protein resides in the secreted. In Californiconus californicus (California cone), this protein is Conotoxin Cl10.1.